The chain runs to 503 residues: MKERIKDKAWRPQFIKLNNPDTSKKIVSQKSKKPEIVDLSSPGNNDLVTISILCVLLCFQLAISLNPHSGESQPPMYGDYEAQRHWMEITVNLPIEQWYLNGTHNDLLYWGLDYPPITAYHHYLLGVISNKINKKWVELTTSRGYESIAHKLFMRLSAIIPFYIFYLPPLIFYFTRSKKMSPILYALALLYPSLLVIDNGHFQYNSISLGLFLATYMFLTKNFTIIGSILFVAALNYKQMELYHALPVFVFILARSINKTQLFNSFRRILTIGLFVVGTFLIIWLPFLLTGTAKDVIIRVFPFNRGLYEDKVASFWCAFSFILKRLPLQSVQIYISTALVLAGSAPSLLVLFLRPTEKQFRISLTATGLSFFLFSFHVHEKTILLAAVPALLLISEYTSLVIWFLNITNISIFSLCVKDNFALSLSFFFAYFVVSYAYTAPRKISHILTILIGFAICILELYGPSNQRFPHIYQLANAFFSCVHFIYFLLYLSFASFEKTKKE.

Over 1-46 (MKERIKDKAWRPQFIKLNNPDTSKKIVSQKSKKPEIVDLSSPGNND) the chain is Cytoplasmic. A helical membrane pass occupies residues 47–67 (LVTISILCVLLCFQLAISLNP). Residues 68-151 (HSGESQPPMY…SRGYESIAHK (84 aa)) are Lumenal-facing. A helical membrane pass occupies residues 152–172 (LFMRLSAIIPFYIFYLPPLIF). At 173 to 181 (YFTRSKKMS) the chain is on the cytoplasmic side. The helical transmembrane segment at 182 to 202 (PILYALALLYPSLLVIDNGHF) threads the bilayer. Residues 203-211 (QYNSISLGL) lie on the Lumenal side of the membrane. A helical transmembrane segment spans residues 212-232 (FLATYMFLTKNFTIIGSILFV). Residues 233 to 239 (AALNYKQ) lie on the Cytoplasmic side of the membrane. A helical membrane pass occupies residues 240–257 (MELYHALPVFVFILARSI). At 258–268 (NKTQLFNSFRR) the chain is on the lumenal side. A helical transmembrane segment spans residues 269 to 289 (ILTIGLFVVGTFLIIWLPFLL). At 290 to 332 (TGTAKDVIIRVFPFNRGLYEDKVASFWCAFSFILKRLPLQSVQ) the chain is on the cytoplasmic side. A helical membrane pass occupies residues 333 to 353 (IYISTALVLAGSAPSLLVLFL). Residues 354 to 359 (RPTEKQ) are Lumenal-facing. Residues 360 to 379 (FRISLTATGLSFFLFSFHVH) form a helical membrane-spanning segment. Residues 380–382 (EKT) are Cytoplasmic-facing. A helical transmembrane segment spans residues 383–403 (ILLAAVPALLLISEYTSLVIW). Topologically, residues 404 to 420 (FLNITNISIFSLCVKDN) are lumenal. The chain crosses the membrane as a helical span at residues 421–441 (FALSLSFFFAYFVVSYAYTAP). Residues 442–443 (RK) are Cytoplasmic-facing. A helical transmembrane segment spans residues 444–464 (ISHILTILIGFAICILELYGP). Residues 465 to 474 (SNQRFPHIYQ) lie on the Lumenal side of the membrane. A helical transmembrane segment spans residues 475–495 (LANAFFSCVHFIYFLLYLSFA). The Cytoplasmic segment spans residues 496–503 (SFEKTKKE).

This sequence belongs to the ALG6/ALG8 glucosyltransferase family.

It localises to the endoplasmic reticulum membrane. The catalysed reaction is an alpha-D-Man-(1-&gt;2)-alpha-D-Man-(1-&gt;2)-alpha-D-Man-(1-&gt;3)-[alpha-D-Man-(1-&gt;2)-alpha-D-Man-(1-&gt;3)-[alpha-D-Man-(1-&gt;2)-alpha-D-Man-(1-&gt;6)]-alpha-D-Man-(1-&gt;6)]-beta-D-Man-(1-&gt;4)-beta-D-GlcNAc-(1-&gt;4)-alpha-D-GlcNAc-diphospho-di-trans,poly-cis-dolichol + a di-trans,poly-cis-dolichyl beta-D-glucosyl phosphate = an alpha-D-Glc-(1-&gt;3)-alpha-D-Man-(1-&gt;2)-alpha-D-Man-(1-&gt;2)-alpha-D-Man-(1-&gt;3)-[alpha-D-Man-(1-&gt;2)-alpha-D-Man-(1-&gt;3)-[alpha-D-Man-(1-&gt;2)-alpha-D-Man-(1-&gt;6)]-alpha-D-Man-(1-&gt;6)]-beta-D-Man-(1-&gt;4)-beta-D-GlcNAc-(1-&gt;4)-alpha-D-GlcNAc-diphospho-di-trans,poly-cis-dolichol + a di-trans,poly-cis-dolichyl phosphate + H(+). The protein operates within protein modification; protein glycosylation. In terms of biological role, adds the first glucose residue to the lipid-linked oligosaccharide precursor for N-linked glycosylation. Transfers glucose from dolichyl phosphate glucose (Dol-P-Glc) onto the lipid-linked oligosaccharide Man(9)GlcNAc(2)-PP-Dol. In Caenorhabditis elegans, this protein is Probable dolichyl pyrophosphate Man9GlcNAc2 alpha-1,3-glucosyltransferase.